We begin with the raw amino-acid sequence, 202 residues long: LexA repressor (202 aa).

The H-T-H motif DNA-binding region spans 27-47; that stretch reads RAEIAAELGFRSANAAEEHLR. Residues S119 and K156 each act as for autocatalytic cleavage activity in the active site.

The protein belongs to the peptidase S24 family. Homodimer.

The enzyme catalyses Hydrolysis of Ala-|-Gly bond in repressor LexA.. Its function is as follows. Represses a number of genes involved in the response to DNA damage (SOS response), including recA and lexA. In the presence of single-stranded DNA, RecA interacts with LexA causing an autocatalytic cleavage which disrupts the DNA-binding part of LexA, leading to derepression of the SOS regulon and eventually DNA repair. The chain is LexA repressor from Marinobacter nauticus (strain ATCC 700491 / DSM 11845 / VT8) (Marinobacter aquaeolei).